The primary structure comprises 66 residues: uncharacterized protein (66 aa).

The next 2 helical transmembrane spans lie at 4 to 24 (ALFI…LLIF) and 38 to 58 (LLTP…ILVL).

It localises to the membrane. This is an uncharacterized protein from Saccharomyces cerevisiae (strain ATCC 204508 / S288c) (Baker's yeast).